A 323-amino-acid polypeptide reads, in one-letter code: Annexin A3 (323 aa).

Ala2 bears the N-acetylalanine mark. Annexin repeat units lie at residues 18–89 (FSPS…ALVT), 90–161 (APAL…TLAD), 173–245 (HLAK…AIVH), and 249–320 (NTPA…KICG). Lys177 bears the N6-acetyllysine mark. The residue at position 267 (Thr267) is a Phosphothreonine.

Belongs to the annexin family.

Functionally, inhibitor of phospholipase A2, also possesses anti-coagulant properties. The sequence is that of Annexin A3 (Anxa3) from Mus musculus (Mouse).